The following is a 113-amino-acid chain: Photosystem II reaction center Psb28 protein (113 aa).

The protein belongs to the Psb28 family. In terms of assembly, part of the photosystem II complex.

The protein resides in the cellular thylakoid membrane. This Nostoc punctiforme (strain ATCC 29133 / PCC 73102) protein is Photosystem II reaction center Psb28 protein.